Here is a 288-residue protein sequence, read N- to C-terminus: Bifunctional protein FolD (288 aa).

Residues 166–168 (GRS), Ser-191, and Ile-232 each bind NADP(+).

This sequence belongs to the tetrahydrofolate dehydrogenase/cyclohydrolase family. As to quaternary structure, homodimer.

The catalysed reaction is (6R)-5,10-methylene-5,6,7,8-tetrahydrofolate + NADP(+) = (6R)-5,10-methenyltetrahydrofolate + NADPH. The enzyme catalyses (6R)-5,10-methenyltetrahydrofolate + H2O = (6R)-10-formyltetrahydrofolate + H(+). It participates in one-carbon metabolism; tetrahydrofolate interconversion. Catalyzes the oxidation of 5,10-methylenetetrahydrofolate to 5,10-methenyltetrahydrofolate and then the hydrolysis of 5,10-methenyltetrahydrofolate to 10-formyltetrahydrofolate. The polypeptide is Bifunctional protein FolD (Rickettsia peacockii (strain Rustic)).